Reading from the N-terminus, the 607-residue chain is Aspartate--tRNA(Asp/Asn) ligase (607 aa).

Glutamate 176 contacts L-aspartate. The segment at 200-203 (QQFK) is aspartate. Residues arginine 222 and histidine 456 each coordinate L-aspartate. ATP is bound at residue 222–224 (RDE). Glutamate 496 lines the ATP pocket. Arginine 503 lines the L-aspartate pocket. 548–551 (GIDR) is a binding site for ATP.

The protein belongs to the class-II aminoacyl-tRNA synthetase family. Type 1 subfamily. As to quaternary structure, homodimer.

The protein localises to the cytoplasm. The enzyme catalyses tRNA(Asx) + L-aspartate + ATP = L-aspartyl-tRNA(Asx) + AMP + diphosphate. Functionally, aspartyl-tRNA synthetase with relaxed tRNA specificity since it is able to aspartylate not only its cognate tRNA(Asp) but also tRNA(Asn). Reaction proceeds in two steps: L-aspartate is first activated by ATP to form Asp-AMP and then transferred to the acceptor end of tRNA(Asp/Asn). The chain is Aspartate--tRNA(Asp/Asn) ligase from Parvibaculum lavamentivorans (strain DS-1 / DSM 13023 / NCIMB 13966).